Here is a 321-residue protein sequence, read N- to C-terminus: Mas-related G-protein coupled receptor member H (321 aa).

Over 1–35 the chain is Extracellular; that stretch reads MEPLAMTLYPLESTQPTRNKTPNETTWSSEHTDDH. A glycan (N-linked (GlcNAc...) asparagine) is linked at Asn-23. The chain crosses the membrane as a helical span at residues 36 to 56; it reads TYFLVSLVICSLGLAGNGLLI. Residues 57 to 71 lie on the Cytoplasmic side of the membrane; it reads WFLIFCIKRKPFTIY. The chain crosses the membrane as a helical span at residues 72 to 92; it reads ILHLAIADFMVLLCSSIMKLV. At 93-102 the chain is on the extracellular side; that stretch reads NTFHIYNMTL. Asn-99 is a glycosylation site (N-linked (GlcNAc...) asparagine). Residues 103 to 126 form a helical membrane-spanning segment; that stretch reads ESYAILFMIFGYNTGLHLLTAISV. Residues 127–147 are Cytoplasmic-facing; that stretch reads ERCLSVLYPIWYQCQRPKHQS. The chain crosses the membrane as a helical span at residues 148 to 168; the sequence is AVACMLLWALSVLVSGLENFF. Residues 169 to 188 lie on the Extracellular side of the membrane; it reads CILEVKPQFPECRYVYIFSC. A helical transmembrane segment spans residues 189-209; sequence ILTFLVFVPLMIFSNLILFIQ. Residues 210 to 225 lie on the Cytoplasmic side of the membrane; it reads VCCNLKPRQPTKLYVI. A helical transmembrane segment spans residues 226 to 246; that stretch reads IMTTVILFLVFAMPMKVLLII. A topological domain (extracellular) is located at residue Gly-247. The helical transmembrane segment at 248-271 threads the bilayer; sequence YYSSSLDDSVWDSLPYLNMLSTIN. Topologically, residues 272 to 320 are cytoplasmic; it reads CSINPIVYFVVGSLRRKRSRKSLKEALQKVFEEKPVVASRENVTQFSLP.

This sequence belongs to the G-protein coupled receptor 1 family. Mas subfamily.

It localises to the cell membrane. Functionally, orphan receptor. May regulate nociceptor function and/or development, including the sensation or modulation of pain. In Mus musculus (Mouse), this protein is Mas-related G-protein coupled receptor member H (Mrgprh).